The sequence spans 119 residues: T cell receptor alpha variable 29/delta variable 5 (119 aa).

The first 21 residues, 1–21 (MAMLLGASVLILWLQPDWVNS), serve as a signal peptide directing secretion. Residues 22–119 (QQKNDDQQVK…DSAVYFCAAS (98 aa)) enclose the Ig-like domain. Cysteine 49 and cysteine 116 are oxidised to a cystine. N-linked (GlcNAc...) asparagine glycosylation occurs at asparagine 93.

As to quaternary structure, alpha-beta TR is a heterodimer composed of an alpha and beta chain; disulfide-linked. The alpha-beta TR is associated with the transmembrane signaling CD3 coreceptor proteins to form the TR-CD3 (TcR or TCR). The assembly of alpha-beta TR heterodimers with CD3 occurs in the endoplasmic reticulum where a single alpha-beta TR heterodimer associates with one CD3D-CD3E heterodimer, one CD3G-CD3E heterodimer and one CD247 homodimer forming a stable octameric structure. CD3D-CD3E and CD3G-CD3E heterodimers preferentially associate with TR alpha and TR beta chains, respectively. The association of the CD247 homodimer is the last step of TcR assembly in the endoplasmic reticulum and is required for transport to the cell surface.

It localises to the cell membrane. V region of the variable domain of T cell receptor (TR) alpha chain that participates in the antigen recognition. Alpha-beta T cell receptors are antigen specific receptors which are essential to the immune response and are present on the cell surface of T lymphocytes. Recognize peptide-major histocompatibility (MH) (pMH) complexes that are displayed by antigen presenting cells (APC), a prerequisite for efficient T cell adaptive immunity against pathogens. Binding of alpha-beta TR to pMH complex initiates TR-CD3 clustering on the cell surface and intracellular activation of LCK that phosphorylates the ITAM motifs of CD3G, CD3D, CD3E and CD247 enabling the recruitment of ZAP70. In turn ZAP70 phosphorylates LAT, which recruits numerous signaling molecules to form the LAT signalosome. The LAT signalosome propagates signal branching to three major signaling pathways, the calcium, the mitogen-activated protein kinase (MAPK) kinase and the nuclear factor NF-kappa-B (NF-kB) pathways, leading to the mobilization of transcription factors that are critical for gene expression and essential for T cell growth and differentiation. The T cell repertoire is generated in the thymus, by V-(D)-J rearrangement. This repertoire is then shaped by intrathymic selection events to generate a peripheral T cell pool of self-MH restricted, non-autoaggressive T cells. Post-thymic interaction of alpha-beta TR with the pMH complexes shapes TR structural and functional avidity. The protein is T cell receptor alpha variable 29/delta variable 5 of Homo sapiens (Human).